The sequence spans 416 residues: Vacuole membrane protein KMS2 (416 aa).

An N-acetylglycine modification is found at glycine 2. At 2–59 (GYGNRASSKTPAISGLREKHQQDLEKLTLTSQPFKTLRLFVVAVFLYVRRWSSYLLAN) the chain is on the cytoplasmic side. A helical membrane pass occupies residues 60–80 (VGWLILFCSIFVAFAALLVTL). Residues 81–100 (DGPHVKHVEELSEYTRFGLW) lie on the Lumenal side of the membrane. Residues 101–123 (WIFLGVASSIGLGSGLHTFVLYL) form a helical membrane-spanning segment. Topologically, residues 124–249 (GPHIALFTIK…WLLSHSQYLN (126 aa)) are cytoplasmic. A helical membrane pass occupies residues 250–270 (FFTILILASVPNPLFDLAGIM). Over 271-281 (CGQFEKPFWEF) the chain is Lumenal. Residues 282–304 (FLATLIGKAIIKTHIQTVFIICV) traverse the membrane as a helical segment. The Cytoplasmic segment spans residues 305–315 (CNNQLLDWVEN). A helical transmembrane segment spans residues 316 to 336 (ELIYILSFVPGFASALPELTA). The Lumenal portion of the chain corresponds to 337–364 (KLRLMKEKYLIASPPVSSDINVKKWDLS). Residues 365 to 385 (FASVWNGVVWLMLLNFFGQIV) traverse the membrane as a helical segment. Over 386–416 (TSTAQRYLKKQQEEELDALTNKSSLTSKKSK) the chain is Cytoplasmic.

Belongs to the VMP1 family.

The protein resides in the endoplasmic reticulum membrane. In terms of biological role, involved in the early secretory pathway. Required for the correct export of secretory products from the endoplasmic reticulum (ER) and involved in the maintenance of ER integrity. The protein is Vacuole membrane protein KMS2 of Arabidopsis thaliana (Mouse-ear cress).